Reading from the N-terminus, the 159-residue chain is HSP70 co-chaperone SNL1 (159 aa).

Topologically, residues 1–12 (MSHNAMEHWKSK) are perinuclear space. A helical; Signal-anchor for type II membrane protein membrane pass occupies residues 13–35 (LSKTSTSTYVLLAVIAVVFLVTI). Residues 36-159 (RRPNGSKGKS…AMLKSLDSLK (124 aa)) are Cytoplasmic-facing. Residues 39 to 64 (NGSKGKSSKKRASKKNKKGKNQFEKA) form a disordered region. The span at 44 to 58 (KSSKKRASKKNKKGK) shows a compositional bias: basic residues. One can recognise a BAG domain in the interval 73–159 (QIDNVSLRYG…AMLKSLDSLK (87 aa)).

As to quaternary structure, interacts with the HSP70 family members SSA1, SSA4, and SSB1. These interactions are strongly reduced by ADP and ATP.

The protein resides in the endoplasmic reticulum membrane. Its subcellular location is the nucleus membrane. Its function is as follows. Stimulator of ATPase activity of molecular chaperones of the HSP70 family (principally of the SSA class). Stimulation is important for HSP70-substrate complex dissociation after folding of newly synthesized or refolded proteins. SNL1 is probably involved in nuclear pore biogenesis and in particular the folding or refolding of misfolded NUP116, GLE2 and NIC96. This is HSP70 co-chaperone SNL1 (SNL1) from Saccharomyces cerevisiae (strain ATCC 204508 / S288c) (Baker's yeast).